We begin with the raw amino-acid sequence, 285 residues long: Probable endonuclease 4 (285 aa).

Zn(2+) is bound by residues histidine 69, histidine 109, glutamate 145, aspartate 179, histidine 182, histidine 216, aspartate 229, histidine 231, and glutamate 261.

It belongs to the AP endonuclease 2 family. The cofactor is Zn(2+).

The enzyme catalyses Endonucleolytic cleavage to 5'-phosphooligonucleotide end-products.. Endonuclease IV plays a role in DNA repair. It cleaves phosphodiester bonds at apurinic or apyrimidinic (AP) sites, generating a 3'-hydroxyl group and a 5'-terminal sugar phosphate. The polypeptide is Probable endonuclease 4 (Shigella boydii serotype 4 (strain Sb227)).